The following is a 506-amino-acid chain: Lysine--tRNA ligase (506 aa).

Positions 415 and 422 each coordinate Mg(2+).

The protein belongs to the class-II aminoacyl-tRNA synthetase family. Homodimer. Requires Mg(2+) as cofactor.

It localises to the cytoplasm. The catalysed reaction is tRNA(Lys) + L-lysine + ATP = L-lysyl-tRNA(Lys) + AMP + diphosphate. The protein is Lysine--tRNA ligase (lysS) of Buchnera aphidicola subsp. Acyrthosiphon pisum (strain APS) (Acyrthosiphon pisum symbiotic bacterium).